Consider the following 876-residue polypeptide: Valine--tRNA ligase (876 aa).

The 'HIGH' region signature appears at Pro44–His54. Positions Lys520–Ser524 match the 'KMSKS' region motif. ATP is bound at residue Lys523. Residues Leu805–Ala876 are a coiled coil.

This sequence belongs to the class-I aminoacyl-tRNA synthetase family. ValS type 1 subfamily. As to quaternary structure, monomer.

It localises to the cytoplasm. It carries out the reaction tRNA(Val) + L-valine + ATP = L-valyl-tRNA(Val) + AMP + diphosphate. Catalyzes the attachment of valine to tRNA(Val). As ValRS can inadvertently accommodate and process structurally similar amino acids such as threonine, to avoid such errors, it has a 'posttransfer' editing activity that hydrolyzes mischarged Thr-tRNA(Val) in a tRNA-dependent manner. This chain is Valine--tRNA ligase, found in Staphylococcus aureus (strain MRSA252).